Here is a 144-residue protein sequence, read N- to C-terminus: Acidic phospholipase A2 (144 aa).

The signal sequence occupies residues 1 to 19; sequence MYPAHLLVLLAVCVSLLGA. Positions 20-27 are excised as a propeptide; that stretch reads SDIPPLPL. 7 cysteine pairs are disulfide-bonded: Cys38–Cys98, Cys54–Cys143, Cys56–Cys72, Cys71–Cys125, Cys78–Cys118, Cys87–Cys111, and Cys105–Cys116. Ca(2+) contacts are provided by Tyr55, Gly57, and Gly59. The active site involves His75. Ca(2+) is bound at residue Asp76. Asp119 is a catalytic residue.

Belongs to the phospholipase A2 family. Group I subfamily. D49 sub-subfamily. Ca(2+) serves as cofactor. Expressed by the venom gland.

The protein localises to the secreted. It catalyses the reaction a 1,2-diacyl-sn-glycero-3-phosphocholine + H2O = a 1-acyl-sn-glycero-3-phosphocholine + a fatty acid + H(+). Functionally, PLA2 catalyzes the calcium-dependent hydrolysis of the 2-acyl groups in 3-sn-phosphoglycerides. This is Acidic phospholipase A2 from Aipysurus laevis (Olive sea snake).